Consider the following 1077-residue polypeptide: Hemoglobin and hemoglobin-haptoglobin-binding protein A (1077 aa).

The first 24 residues, 1 to 24 (MTNFRLNVLAYSVMLGLTASVAYA), serve as a signal peptide directing secretion. The tract at residues 25–72 (EPTNQPTNQPTNQPTNQPTNQPTNQPTNQPTNQPTNQPTNQPTNQNSN) is disordered. 11 repeat units span residues 26-29 (PTNQ), 30-33 (PTNQ), 34-37 (PTNQ), 38-41 (PTNQ), 42-45 (PTNQ), 46-49 (PTNQ), 50-53 (PTNQ), 54-57 (PTNQ), 58-61 (PTNQ), 62-65 (PTNQ), and 66-69 (PTNQ). Residues 26–69 (PTNQPTNQPTNQPTNQPTNQPTNQPTNQPTNQPTNQPTNQPTNQ) are 11 X 4 AA tandem repeats of P-T-N-Q. A compositionally biased stretch (low complexity) spans 26–70 (PTNQPTNQPTNQPTNQPTNQPTNQPTNQPTNQPTNQPTNQPTNQN). Residues 78-85 (EQINVSGS) carry the TonB box motif. Positions 89-216 (TDTKAPPKIA…LGGSVSLDTK (128 aa)) constitute a TBDR plug domain. One can recognise a TBDR beta-barrel domain in the interval 224 to 1077 (NKNYYASYKR…NYRMSVQFEF (854 aa)). A TonB C-terminal box motif is present at residues 1060–1077 (NRFYAPERNYRMSVQFEF).

It belongs to the TonB-dependent receptor family. Hemoglobin/haptoglobin binding protein subfamily.

It localises to the cell outer membrane. Acts as a receptor for hemoglobin or the hemoglobin/haptoglobin complex of the human host and is required for heme uptake. The protein is Hemoglobin and hemoglobin-haptoglobin-binding protein A (hgpA) of Haemophilus influenzae.